The sequence spans 394 residues: Formate-dependent phosphoribosylglycinamide formyltransferase (394 aa).

N(1)-(5-phospho-beta-D-ribosyl)glycinamide contacts are provided by residues 21 to 22 (EL) and Glu-81. ATP-binding positions include Arg-113, Lys-154, 159–164 (SSGKGQ), 194–197 (EEFI), and Glu-202. Residues 118–307 (RLAAEELGLP…QFELHVRAIL (190 aa)) enclose the ATP-grasp domain. Residues Glu-266 and Glu-278 each coordinate Mg(2+). Residues Asp-285, Lys-355, and 362-363 (RR) contribute to the N(1)-(5-phospho-beta-D-ribosyl)glycinamide site.

It belongs to the PurK/PurT family. As to quaternary structure, homodimer.

It carries out the reaction N(1)-(5-phospho-beta-D-ribosyl)glycinamide + formate + ATP = N(2)-formyl-N(1)-(5-phospho-beta-D-ribosyl)glycinamide + ADP + phosphate + H(+). Its pathway is purine metabolism; IMP biosynthesis via de novo pathway; N(2)-formyl-N(1)-(5-phospho-D-ribosyl)glycinamide from N(1)-(5-phospho-D-ribosyl)glycinamide (formate route): step 1/1. In terms of biological role, involved in the de novo purine biosynthesis. Catalyzes the transfer of formate to 5-phospho-ribosyl-glycinamide (GAR), producing 5-phospho-ribosyl-N-formylglycinamide (FGAR). Formate is provided by PurU via hydrolysis of 10-formyl-tetrahydrofolate. This is Formate-dependent phosphoribosylglycinamide formyltransferase from Pelobacter propionicus (strain DSM 2379 / NBRC 103807 / OttBd1).